Here is a 156-residue protein sequence, read N- to C-terminus: MRVHICAVGRLRAGPEKTLIDDYLQRFDRSGRALGLGPARVIEVEDKKNAGMGAEADLLRKALPKGALICTLDERGKVISSPDFAEKLAGWRDMGRQDLAFVIGGADGIDPSLRAEADFSISFGKMVWPHMMVRLMLAEQVYRSATILSGSPYHRV.

Residues Leu72, Gly104, and 123-128 (FGKMVW) each bind S-adenosyl-L-methionine.

The protein belongs to the RNA methyltransferase RlmH family. Homodimer.

The protein resides in the cytoplasm. The catalysed reaction is pseudouridine(1915) in 23S rRNA + S-adenosyl-L-methionine = N(3)-methylpseudouridine(1915) in 23S rRNA + S-adenosyl-L-homocysteine + H(+). Functionally, specifically methylates the pseudouridine at position 1915 (m3Psi1915) in 23S rRNA. The protein is Ribosomal RNA large subunit methyltransferase H of Ruegeria sp. (strain TM1040) (Silicibacter sp.).